Consider the following 184-residue polypeptide: MAIDKEKIKQAVRLFLEGIGEDPDREGLKETPERVARMWEEFERMRNFDMKLFEEFGGYNEMVLVKDIKFYSLCEHHLLPFFGKVHIAYIPDKKISGLSKLVRTVRAFALRPQVQERLTEEIADFLEKELEPKGVGVVIEAEHLCMSMRGVMSPGHLTVTSALRGVFLKDIKTREEFLKLVKGV.

Zn(2+)-binding residues include cysteine 74, histidine 77, and cysteine 145.

The protein belongs to the GTP cyclohydrolase I family. As to quaternary structure, toroid-shaped homodecamer, composed of two pentamers of five dimers.

The enzyme catalyses GTP + H2O = 7,8-dihydroneopterin 3'-triphosphate + formate + H(+). The protein operates within cofactor biosynthesis; 7,8-dihydroneopterin triphosphate biosynthesis; 7,8-dihydroneopterin triphosphate from GTP: step 1/1. The protein is GTP cyclohydrolase 1 (folE) of Aquifex aeolicus (strain VF5).